The following is a 119-amino-acid chain: uncharacterized protein (119 aa).

The disordered stretch occupies residues 64-119 (SAPLGLKEVQKKSNEGLNEVQGAADINKQKRPANSQDSSSVEGDIQNFLEKVTGKN). A compositionally biased stretch (polar residues) spans 95–104 (PANSQDSSSV).

This is an uncharacterized protein from Nostoc sp. (strain PCC 7120 / SAG 25.82 / UTEX 2576).